The chain runs to 336 residues: Calcium uniporter regulatory subunit MCUb, mitochondrial (336 aa).

Residues 1–35 (MLQRGLWPWRTRLLPTPGTWRPARPWPLPPPPQVL) constitute a mitochondrion transit peptide. Residues 179 to 210 (ESQKKREHHLLEKIDHLKEQLQPLEQVKAGIE) are a coiled coil. The next 2 helical transmembrane spans lie at 220–240 (LLWAGLALLSIQGGALAWLTW) and 250–270 (PVTYFITFANSMVFFAYFIVT). Positions 297 to 323 (FDVQQYNKLKEDLAKAKESLKQARHSL) form a coiled coil.

Belongs to the MCU (TC 1.A.77) family. As to quaternary structure, homooligomer. Associates with the uniplex complex, composed of MCU, MICU1, MICU2 and EMRE/SMDT1, inhibiting its activity.

It is found in the mitochondrion inner membrane. In terms of biological role, negative regulator of the mitochondrial calcium uniporter (MCU), a channel that mediates calcium uptake into the mitochondrial matrix. MCUB is required to limit mitochondrial calcium overload during stress. Acts as a dominant-negative regulator that displaces MCU from the functional uniplex complex and thereby decreases the association of calcium sensors MICU1 and MICU2, preventing channel gating. Mitochondrial calcium homeostasis plays key roles in mitochondrial metabolism. Acts as an important regulator of mitochondrial metabolism in response to stress in muscle cells: induced in response to fasting, leading to restrict mitochondrial calcium uptake, resulting in reprogramming of mitochondria toward fatty acid oxidation preference. Acts as a regulator of macrophage polarization during skeletal muscle regeneration: inhibition of mitochondrial calcium uptake drives differentiation of macrophages with anti-inflammatory profile, promoting the differentiation and fusion of satellite cells. The chain is Calcium uniporter regulatory subunit MCUb, mitochondrial from Homo sapiens (Human).